The sequence spans 273 residues: MKKTQTWILTCIYLQLLLFNPLVKTEGICRNRVTNNVKDVTKLVANLPKDYMITLKYVPGMDVLPSHCWISEMVVQLSDSLTDLLDKFSNISEGLSNYSIIDKLVNIVDDLVECVKENSSKDLKKSFKSPEPRLFTPEEFFRIFNRSIDAFKDFVVASETSDCVVSSTLSPEKDSRVSVTKPFMLPPVAASSLRNDSSSSNRKAKNPPGDSSLHWAAMALPALFSLIIGFAFGALYWKKRQPSLTRAVENIQINEEDNEISMLQEKEREFQEV.

The signal sequence occupies residues 1 to 25; it reads MKKTQTWILTCIYLQLLLFNPLVKT. Topologically, residues 26 to 214 are extracellular; the sequence is EGICRNRVTN…KNPPGDSSLH (189 aa). 2 disulfide bridges follow: Cys-29–Cys-114 and Cys-68–Cys-163. N-linked (GlcNAc...) asparagine; partial glycans are attached at residues Asn-90 and Asn-118. Asn-145 is a glycosylation site (N-linked (GlcNAc...) asparagine). Ser-167 is a glycosylation site (O-linked (GalNAc...) serine). 2 O-linked (GalNAc...) threonine glycosylation sites follow: Thr-168 and Thr-180. Asn-195 is a glycosylation site (N-linked (GlcNAc...) asparagine). The helical transmembrane segment at 215–237 threads the bilayer; it reads WAAMALPALFSLIIGFAFGALYW. Topologically, residues 238-273 are cytoplasmic; sequence KKRQPSLTRAVENIQINEEDNEISMLQEKEREFQEV.

Belongs to the SCF family. Homodimer, non-covalently linked. Heterotetramer with KIT, binding two KIT molecules; thereby mediates KIT dimerization and subsequent activation by autophosphorylation. Post-translationally, a soluble form (sKITLG) is produced by proteolytic processing of isoform 1 in the extracellular domain. Found in two differentially glycosylated forms, LMW-SCF and HMW-SCF. LMW-SCF is fully N-glycosylated at Asn-145, partially N-glycosylated at Asn-90, O-glycosylated at Ser-167, Thr-168 and Thr-180, and not glycosylated at Asn-97 or Asn-118. HMW-SCF is N-glycosylated at Asn-118, Asn-90 and Asn-145, O-glycosylated at Ser-167, Thr-168 and Thr-180, and not glycosylated at Asn-97. In terms of processing, a soluble form exists as a cleavage product of the extracellular domain.

Its subcellular location is the cell membrane. It localises to the cytoplasm. It is found in the cytoskeleton. The protein localises to the cell projection. The protein resides in the lamellipodium. Its subcellular location is the filopodium. It localises to the secreted. Functionally, ligand for the receptor-type protein-tyrosine kinase KIT. Plays an essential role in the regulation of cell survival and proliferation, hematopoiesis, stem cell maintenance, gametogenesis, mast cell development, migration and function, and in melanogenesis. KITLG/SCF binding can activate several signaling pathways. Promotes phosphorylation of PIK3R1, the regulatory subunit of phosphatidylinositol 3-kinase, and subsequent activation of the kinase AKT1. KITLG/SCF and KIT also transmit signals via GRB2 and activation of RAS, RAF1 and the MAP kinases MAPK1/ERK2 and/or MAPK3/ERK1. KITLG/SCF and KIT promote activation of STAT family members STAT1, STAT3 and STAT5. KITLG/SCF and KIT promote activation of PLCG1, leading to the production of the cellular signaling molecules diacylglycerol and inositol 1,4,5-trisphosphate. KITLG/SCF acts synergistically with other cytokines, probably interleukins. This is Kit ligand from Homo sapiens (Human).